The sequence spans 807 residues: G-type lectin S-receptor-like serine/threonine-protein kinase At1g61420 (807 aa).

A signal peptide spans 1–24 (MGKKWIVFFAYLLLSSFFISSSSA). The Bulb-type lectin domain maps to 25–144 (GITKESPLPI…FSGRTLWQSF (120 aa)). Over 25–426 (GITKESPLPI…ELGGNKRKKA (402 aa)) the chain is Extracellular. 6 N-linked (GlcNAc...) asparagine glycosylation sites follow: N53, N94, N117, N134, N236, and N267. The region spanning 278 to 314 (PEHSCDYYGVCGPFGLCVKSVPPKCTCFKGFVPKLIE) is the EGF-like; atypical domain. Cystine bridges form between C282-C294 and C288-C302. N-linked (GlcNAc...) asparagine glycosylation is found at N320, N336, and N375. Residues 333-413 (CQGNSTGKYA…EGGELLSIRL (81 aa)) form the PAN domain. 2 cysteine pairs are disulfide-bonded: C368–C389 and C372–C378. The chain crosses the membrane as a helical span at residues 427-447 (ITASIVSLSLVVIIAFVAFCF). The Cytoplasmic segment spans residues 448-807 (WRYRVKHNAD…EMTKSVILGR (360 aa)). One can recognise a Protein kinase domain in the interval 494–779 (FSISNKLGQG…DLPPPEQPTF (286 aa)). ATP contacts are provided by residues 500 to 508 (LGQGGFGPV) and K522. 2 positions are modified to phosphoserine: S528 and S543. The tract at residues 583-600 (RKRLEIDWPKRLDIIQGI) is caM-binding. D619 serves as the catalytic Proton acceptor. S623 and S636 each carry phosphoserine. A Phosphothreonine modification is found at T653. Residues S696 and S790 each carry the phosphoserine modification.

It belongs to the protein kinase superfamily. Ser/Thr protein kinase family.

It localises to the cell membrane. It carries out the reaction L-seryl-[protein] + ATP = O-phospho-L-seryl-[protein] + ADP + H(+). It catalyses the reaction L-threonyl-[protein] + ATP = O-phospho-L-threonyl-[protein] + ADP + H(+). The polypeptide is G-type lectin S-receptor-like serine/threonine-protein kinase At1g61420 (Arabidopsis thaliana (Mouse-ear cress)).